The following is a 428-amino-acid chain: Aspartate--tRNA(Asp) ligase (428 aa).

Residue Glu170 coordinates L-aspartate. Positions 192 to 195 are aspartate; the sequence is QLYK. Arg213 contributes to the L-aspartate binding site. ATP is bound by residues 213–215 and Glu351; that span reads RAE. Mg(2+) is bound by residues Glu351 and Ser354. The L-aspartate site is built by Ser354 and Arg358. 399 to 402 provides a ligand contact to ATP; sequence GFNR.

The protein belongs to the class-II aminoacyl-tRNA synthetase family. Type 2 subfamily. In terms of assembly, homodimer. Mg(2+) serves as cofactor.

The protein resides in the cytoplasm. The enzyme catalyses tRNA(Asp) + L-aspartate + ATP = L-aspartyl-tRNA(Asp) + AMP + diphosphate. Catalyzes the attachment of L-aspartate to tRNA(Asp) in a two-step reaction: L-aspartate is first activated by ATP to form Asp-AMP and then transferred to the acceptor end of tRNA(Asp). The chain is Aspartate--tRNA(Asp) ligase from Pyrobaculum aerophilum (strain ATCC 51768 / DSM 7523 / JCM 9630 / CIP 104966 / NBRC 100827 / IM2).